Here is a 2493-residue protein sequence, read N- to C-terminus: Non-reducing polyketide synthase pkiA (2493 aa).

An N-terminal acylcarrier protein transacylase domain (SAT) region spans residues 129–243; that stretch reads PLLMMTHFVQ…VQYDENRATI (115 aa). Cys-160 (nucleophile; for transacylase activity) is an active-site residue. The active-site Proton donor/acceptor; for transacylase activity is His-274. Residues 401-818 form the Ketosynthase family 3 (KS3) domain; the sequence is ETDIAIVGMA…GSNASMVITQ (418 aa). Active-site for beta-ketoacyl synthase activity residues include Cys-567, His-702, and His-741. The tract at residues 926-1261 is malonyl-CoA:ACP transacylase (MAT); that stretch reads CFGGQVGRSI…EYAPLLLPPY (336 aa). An N-terminal hotdog fold region spans residues 1259 to 1387; sequence PPYQFERTRH…AHISMHDVRC (129 aa). The 304-residue stretch at 1259-1562 folds into the PKS/mFAS DH domain; sequence PPYQFERTRH…YSRVAKSLFT (304 aa). His-1291 functions as the Proton acceptor; for dehydratase activity in the catalytic mechanism. Residues 1297–1558 are product template (PT) domain; it reads APIAPATLLL…LGLRYSRVAK (262 aa). The interval 1415-1562 is C-terminal hotdog fold; it reads VDDILQGRNV…YSRVAKSLFT (148 aa). Asp-1471 (proton donor; for dehydratase activity) is an active-site residue. A Carrier domain is found at 1588–1662; sequence KDLVSRVKAV…DLVQAVQSAL (75 aa). Ser-1622 carries the post-translational modification O-(pantetheine 4'-phosphoryl)serine. The segment at 1822-2063 is methyltransferase (CMeT) domain; sequence REYPEYGGAS…YGHVDWTDGE (242 aa). An NADPH-binding domain region spans residues 2128–2366; that stretch reads VTGATGSLGS…TPVDVAARII (239 aa).

Requires pantetheine 4'-phosphate as cofactor.

It carries out the reaction decanoyl-[ACP] + 4 malonyl-CoA + AH2 + S-adenosyl-L-methionine + 3 H(+) = 2,4-dihydroxy-3-methyl-6-(2-oxoundecyl)benzaldehyde + holo-[ACP] + A + S-adenosyl-L-homocysteine + 4 CO2 + 4 CoA + H2O. The protein operates within secondary metabolite biosynthesis. Functionally, non-reducing polyketide synthase; part of the pki gene cluster that mediates the biosynthesis of 2,4-dihydroxy-3-methyl-6-(2-oxoundecyl)benzaldehyde. The first step in the pathway is the generation of the decanoyl starter unit by the FAS composed of subunits pkiB and pkiC, which is then transferred directly from the FAS to the SAT domain of the non-reducing polyketide synthase pkiA. PkiA condenses the decanoyyl starter unit with 4 malonyl-CoA units and performs one methylation step to yield 2,4-dihydroxy-3-methyl-6-(2-oxoundecyl)benzaldehyde. The chain is Non-reducing polyketide synthase pkiA from Emericella nidulans (strain FGSC A4 / ATCC 38163 / CBS 112.46 / NRRL 194 / M139) (Aspergillus nidulans).